The primary structure comprises 587 residues: Protein NDNF (587 aa).

Positions 1 to 24 (MQRSTMLPGVELLLLFLLSTSLHA) are cleaved as a signal peptide. N-linked (GlcNAc...) asparagine glycans are attached at residues N109, N129, N190, N321, N334, N459, N498, and N558.

As to quaternary structure, binds heparin. Interacts with dally; the interaction promotes dally degradation. Interacts with dpp and gbb.

The protein localises to the secreted. It localises to the extracellular space. Its subcellular location is the extracellular matrix. In terms of biological role, secretory protein that acts as a feedback regulator of dpp/BMP, wg and hh signaling pathways. In the developing wing, is a dosage-dependent modulator of dpp/BMP signaling involved in wing growth and crossvein patterning; low levels promote and high levels inhibit dpp/BMP signaling. In the early pupal wing, inhibits dpp/BMP signaling activity to prevent the formation of ectopic crossveins in the posterior compartment. Binds to dpp and gbb to modulate their release and activity decreasing dpp/BMP signaling in the responding cells. During wing development regulates dpp/BMP coreceptor dally availability on the cell surface. Might have a role in testis development. This chain is Protein NDNF, found in Drosophila melanogaster (Fruit fly).